A 684-amino-acid chain; its full sequence is Histamine oxidase (684 aa).

316–327 (YFDSGEYLVGRD) contacts substrate. Residue aspartate 318 is the Proton acceptor of the active site. Cysteine 337 and cysteine 363 are joined by a disulfide. Position 399–404 (399–404 (VGNYDY)) interacts with substrate. Residue tyrosine 402 is the Schiff-base intermediate with substrate; via topaquinone of the active site. At tyrosine 402 the chain carries 2',4',5'-topaquinone. Histidine 451 and histidine 453 together coordinate Cu cation. Ca(2+) contacts are provided by aspartate 460, glutamate 500, tyrosine 590, and aspartate 601. Aspartate 460 contacts Mn(2+). Residue aspartate 601 participates in Mn(2+) binding. Histidine 612 contacts Cu cation. The tract at residues 647–684 (SSAAGHCGTGSEREHAAPGGTAVGHSGPDTGGQGHCGH) is disordered. Residues 675-684 (DTGGQGHCGH) are compositionally biased toward gly residues.

It belongs to the copper/topaquinone oxidase family. In terms of assembly, homodimer. Cu cation serves as cofactor. It depends on Zn(2+) as a cofactor. Ca(2+) is required as a cofactor. The cofactor is L-topaquinone. Requires Mn(2+) as cofactor. In terms of processing, topaquinone (TPQ) is generated by copper-dependent autoxidation of a specific tyrosyl residue.

The protein localises to the cytoplasm. It catalyses the reaction a primary methyl amine + O2 + H2O = an aldehyde + H2O2 + NH4(+). The catalysed reaction is histamine + O2 + H2O = imidazole-4-acetaldehyde + H2O2 + NH4(+). Oxidizes histamine. Other amines including phenethylamine, tyramine, tryptamine, putrescine, and benzylamine also serve as substrate. This is Histamine oxidase from Arthrobacter globiformis.